Reading from the N-terminus, the 259-residue chain is Triosephosphate isomerase (259 aa).

10–12 (NWK) is a substrate binding site. Catalysis depends on H100, which acts as the Electrophile. E172 serves as the catalytic Proton acceptor. Substrate-binding positions include G178, S218, and 239-240 (GG).

Belongs to the triosephosphate isomerase family. As to quaternary structure, homodimer.

The protein localises to the cytoplasm. It carries out the reaction D-glyceraldehyde 3-phosphate = dihydroxyacetone phosphate. Its pathway is carbohydrate biosynthesis; gluconeogenesis. It participates in carbohydrate degradation; glycolysis; D-glyceraldehyde 3-phosphate from glycerone phosphate: step 1/1. In terms of biological role, involved in the gluconeogenesis. Catalyzes stereospecifically the conversion of dihydroxyacetone phosphate (DHAP) to D-glyceraldehyde-3-phosphate (G3P). The chain is Triosephosphate isomerase from Corynebacterium glutamicum (strain ATCC 13032 / DSM 20300 / JCM 1318 / BCRC 11384 / CCUG 27702 / LMG 3730 / NBRC 12168 / NCIMB 10025 / NRRL B-2784 / 534).